A 67-amino-acid chain; its full sequence is Protein AaeX (67 aa).

A run of 2 helical transmembrane segments spans residues 3-23 (VLPV…ELII) and 43-63 (LVWH…YLVS).

Belongs to the AaeX family.

Its subcellular location is the cell membrane. The sequence is that of Protein AaeX from Pantoea vagans (strain C9-1) (Pantoea agglomerans (strain C9-1)).